The primary structure comprises 237 residues: Cytosolic-abundant heat soluble protein 1 (237 aa).

Composition is skewed to basic and acidic residues over residues 1–17 (MPYEKHVEQTVVEKTEQ) and 91–105 (VDMRPSPKLAEEARR). 2 disordered regions span residues 1–35 (MPYEKHVEQTVVEKTEQPGHSSTHHAPAQRTVARE) and 85–105 (SGASTEVDMRPSPKLAEEARR). Positions 98-201 (KLAEEARRDA…KEALERSRMA (104 aa)) form a coiled coil. CAHS motif regions lie at residues 132-150 (YRHQTEAEAEKIRRELEKQ) and 169-187 (QKREVDLEAKMAKRELDRE). Residues 212–237 (AGHTVSGGTTVSSVDKVETVRERKHH) form a disordered region. A compositionally biased stretch (basic and acidic residues) spans 226–237 (DKVETVRERKHH).

This sequence belongs to the Cytosolic-abundant heat soluble protein (CAHS) family.

The protein resides in the cytoplasm. Its subcellular location is the nucleus. CAHS proteins are cytosolic heat soluble proteins that seem to contribute to the anhydrobiosis in tardigrades, but their specific mechanisms are yet to be identified. It is possible that protection during anhydrobiosis might occur via the stabilization of vitrifying small molecules such as sugars, but not via the direct glass transition of CAHS proteins themselves. This chain is Cytosolic-abundant heat soluble protein 1, found in Ramazzottius varieornatus (Water bear).